The sequence spans 200 residues: MSIKKKTEMNKSIKGSKTEKHLLMAFAGESQARSRYTFFASVAKKEGYEQIAGVFMETAEQEKEHAKRFFSFLEGGMLEITASFPAGIIGSTAENLRAAAAGENEEWTDLYPAFAETAEEEGFKEIAAVFRQIAKVEAEHERRYLALLAHVEDGSVFERTEEIAWQCRNCGYVITSKKAPKLCPACAHPQAYFEPMKTNY.

The region spanning 12 to 155 (SIKGSKTEKH…ALLAHVEDGS (144 aa)) is the Ferritin-like diiron domain. Residues Glu29, Glu62, Glu103, Glu106, Glu137, His140, Cys167, Cys170, Cys183, and Cys186 each contribute to the Fe(3+) site. Residues 162 to 200 (EIAWQCRNCGYVITSKKAPKLCPACAHPQAYFEPMKTNY) enclose the Rubredoxin-like domain.

In terms of assembly, homodimer. Possesses two rubredoxin-like centers and two non-sulfur oxo-bridged di-iron centers per dimer. It depends on Fe(3+) as a cofactor.

It localises to the cytoplasm. In terms of biological role, may provide oxidative stress protection via catalytic reduction of intracellular hydrogen peroxide. This is Rubrerythrin (rbr) from Porphyromonas gingivalis (strain ATCC BAA-308 / W83).